The sequence spans 2627 residues: MEKLHGHVSAHPDILSLENRCLAMLPDLQPLEKLHQHVSTHSDILSLKNQCLATLPDLKTMEKPHGYVSAHPDILSLENQCLATLSDLKTMEKPHGHVSAHPDILSLENRCLATLSSLKSTVSASPLFQSLQISHMTQADLYRVNNSNCLLSEPPSWRAQHFSKGLDLSTCPIALKSISATETAQEATLGRWFDSEEKKGAETQMPSYSLSLGEEEEVEDLAVKLTSGDSESHPEPTDHVLQEKKMALLSLLCSTLVSEVNMNNTSDPTLAAIFEICRELALLEPEFILKASLYARQQLNVRNVANNILAIAAFLPACRPHLRRYFCAIVQLPSDWIQVAELYQSLAEGDKNKLVPLPACLRTAMTDKFAQFDEYQLAKYNPRKHRAKRHPRRPPRSPGMEPPFSHRCFPRYIGFLREEQRKFEKAGDTVSEKKNPPRFTLKKLVQRLHIHKPAQHVQALLGYRYPSNLQLFSRSRLPGPWDSSRAGKRMKLSRPETWERELSLRGNKASVWEELIENGKLPFMAMLRNLCNLLRVGISSRHHELILQRLQHAKSVIHSRQFPFRFLNAHDAIDALEAQLRNQALPFPSNITLMRRILTRNEKNRPRRRFLCHLSRQQLRMAMRIPVLYEQLKREKLRVHKARQWKYDGEMLNRYRQALETAVNLSVKHSLPLLPGRTVLVYLTDANADRLCPKSNPQGPPLNYALLLIGMMITRAEQVDVVLCGGDTLKTAVLKAEEGILKTAIKLQAQVQEFDENDGWSLNTFGKYLLSLAGQRVPVDRVILLGQSMDDGMINVAKQLYWQRVNSKCLFVGILLRRVQYLSTDLNPNDVTLSGCTDAILKFIAEHGASHLLEHVGQMDKIFKIPPPPGKTGVQSLRPLEEDTPSPLAPVSQQGWRSIRLFISSTFRDMHGERDLLLRSVLPALQARAAPHRISLHGIDLRWGVTEEETRRNRQLEVCLGEVENAQLFVGILGSRYGYIPPSYNLPDHPHFHWAQQYPSGRSVTEMEVMQFLNRNQRLQPSAQALIYFRDSSFLSSVPDAWKSDFVSESEEAARRISELKSYLSRQKGITCRRYPCEWGGVAAGRPYVGGLEEFGQLVLQDVWNMIQKLYLQPGALLEQPVSIPDDDLVQATFQQLQKPPSPARPRLLQDTVQRLMLPHGRLSLVTGQSGQGKTAFLASLVSALQAPDGAKVASLVFFHFSGARPDQGLALTLLRRLCTYLRGQLKEPGALPSTYRSLVWELQQRLLPKSAESLHPGQTQVLIIDGADRLVDQNGQLISDWIPKKLPRCVHLVLSVSSDAGLGETLEQSQGAHVLALGPLEASARARLVREELALYGKRLEESPFNNQMRLLLVKRESGRPLYLRLVTDHLRLFTLYEQVSERLRTLPATVPLLLQHILSTLEKEHGPDVLPQALTALEVTRSGLTVDQLHGVLSVWRTLPKGTKSWEEAVAAGNSGDPYPMGPFACLVQSLRSLLGEGPLERPGARLCLPDGPLRTAAKRCYGKRPGLEDTAHILIAAQLWKTCDADASGTFRSCPPEALGDLPYHLLQSGNRGLLSKFLTNLHVVAAHLELGLVSRLLEAHALYASSVPKEEQKLPEADVAVFRTFLRQQASILSQYPRLLPQQAANQPLDSPLCHQASLLSRRWHLQHTLRWLNKPRTMKNQQSSSLSLAVSSSPTAVAFSTNGQRAAVGTANGTVYLLDLRTWQEEKSVVSGCDGISACLFLSDDTLFLTAFDGLLELWDLQHGCRVLQTKAHQYQITGCCLSPDCRLLATVCLGGCLKLWDTVRGQLAFQHTYPKSLNCVAFHPEGQVIATGSWAGSISFFQVDGLKVTKDLGAPGASIRTLAFNVPGGVVAVGRLDSMVELWAWREGARLAAFPAHHGFVAAALFLHAGCQLLTAGEDGKVQVWSGSLGRPRGHLGSLSLSPALSVALSPDGDRVAVGYRADGIRIYKISSGSQGAQGQALDVAVSALAWLSPKVLVSGAEDGSLQGWALKECSLQSLWLLSRFQKPVLGLATSQELLASASEDFTVQLWPRQLLTRPHKAEDFPCGTELRGHEGPVSCCSFSTDGGSLATGGRDRSLLCWDVRTPKTPVLIHSFPACHRDWVTGCAWTKDNLLISCSSDGSVGLWDPESGQRLGQFLGHQSAVSAVAAVEEHVVSVSRDGTLKVWDHQGVELTSIPAHSGPISHCAAAMEPRAAGQPGSELLVVTVGLDGATRLWHPLLVCQTHTLLGHSGPVRAAAVSETSGLMLTASEDGSVRLWQVPKEADDTCIPRSSAAVTAVAWAPDGSMAVSGNQAGELILWQEAKAVATAQAPGHIGALIWSSAHTFFVLSADEKISEWQVKLRKGSAPGNLSLHLNRILQEDLGVLTSLDWAPDGHFLILAKADLKLLCMKPGDAPSEIWSSYTENPMILSTHKEYGIFVLQPKDPGVLSFLRQKESGEFEERLNFDINLENPSRTLISITQAKPESESSFLCASSDGILWNLAKCSPEGEWTTGNMWQKKANTPETQTPGTDPSTCRESDASMDSDASMDSEPTPHLKTRQRRKIHSGSVTALHVLPELLVTASKDRDVKLWERPSMQLLGLFRCEGSVSCLEPWLGANSTLQLAVGDVQGNVYFLNWE.

TEP1 N-terminal repeat units lie at residues 1-30, 31-60, 61-90, and 91-120; these read MEKL…DLQP, LEKL…DLKT, MEKP…DLKT, and MEKP…SLKS. Disordered regions lie at residues 193-214 and 383-402; these read FDSE…SLGE and RKHR…GMEP. Positions 223–676 constitute a TROVE domain; that stretch reads VKLTSGDSES…VKHSLPLLPG (454 aa). Residues 383-395 show a composition bias toward basic residues; the sequence is RKHRAKRHPRRPP. The NACHT domain maps to 1162 to 1490; sequence RLSLVTGQSG…PLERPGARLC (329 aa). Residue 1168–1175 participates in ATP binding; that stretch reads GQSGQGKT. 19 WD repeats span residues 1411–1448, 1674–1713, 1716–1754, 1757–1796, 1798–1837, 1840–1879, 1882–1921, 1925–1964, 1967–2005, 2008–2047, 2059–2098, 2105–2143, 2146–2183, 2185–2233, 2236–2275, 2278–2317, 2319–2355, 2368–2417, and 2459–2500; these read VLPQ…TKSW, AVSS…EEKS, SGCD…RVLQ, AHQY…LAFQ, TYPK…VTKD, APGA…RLAA, AHHG…PRGH, LSLS…QGAQ, ALDV…LQSL, LSRF…RPHK, GHEG…TPVL, CHRD…RLGQ, GHQS…LTSI, AHSG…QTHT, GHSG…DDTC, RSSA…ATAQ, PGHI…GSAP, EDLG…PMIL, and NPSR…GEWT. The segment covering 2506–2522 has biased composition (polar residues); the sequence is QKKANTPETQTPGTDPS. Positions 2506-2551 are disordered; it reads QKKANTPETQTPGTDPSTCRESDASMDSDASMDSEPTPHLKTRQRR. 2 WD repeats span residues 2553 to 2590 and 2592 to 2626; these read IHSG…LLGL and RCEG…FLNW.

In terms of assembly, associated component of the telomerase holoenzyme complex. Component of the vault ribonucleoprotein particle, at least composed of MVP, PARP4 and one or more vault RNAs (vRNAs). Binds to VAULTRC1, VAULTRC2 and VAULTRC4/hvg4 vRNAs. Ubiquitous.

Its subcellular location is the nucleus. It is found in the chromosome. It localises to the telomere. In terms of biological role, component of the telomerase ribonucleoprotein complex that is essential for the replication of chromosome termini. Also a component of the ribonucleoprotein vaults particle, a multi-subunit structure involved in nucleo-cytoplasmic transport. Responsible for the localizing and stabilizing vault RNA (vRNA) association in the vault ribonucleoprotein particle. Binds to TERC. This chain is Telomerase protein component 1 (TEP1), found in Homo sapiens (Human).